Here is a 980-residue protein sequence, read N- to C-terminus: Protein translocase subunit SecA (980 aa).

ATP-binding positions include Q109, 127-131 (GEGKT), and D529. The disordered stretch occupies residues 954–980 (QKIGRNDPCPCGSGKKYKHCHGKDNPQ). Zn(2+)-binding residues include C962, C964, C973, and H974.

The protein belongs to the SecA family. As to quaternary structure, monomer and homodimer. Part of the essential Sec protein translocation apparatus which comprises SecA, SecYEG and auxiliary proteins SecDF. Other proteins may also be involved. Requires Zn(2+) as cofactor.

The protein resides in the cell inner membrane. It is found in the cytoplasm. It carries out the reaction ATP + H2O + cellular proteinSide 1 = ADP + phosphate + cellular proteinSide 2.. Its function is as follows. Part of the Sec protein translocase complex. Interacts with the SecYEG preprotein conducting channel. Has a central role in coupling the hydrolysis of ATP to the transfer of proteins into and across the cell membrane, serving as an ATP-driven molecular motor driving the stepwise translocation of polypeptide chains across the membrane. This chain is Protein translocase subunit SecA, found in Brachyspira hyodysenteriae (strain ATCC 49526 / WA1).